The sequence spans 29 residues: uncharacterized protein (29 aa).

A helical membrane pass occupies residues 8–28; that stretch reads FALIVVLFILLIIVGTAFVGG.

The protein belongs to the SscA family.

It localises to the membrane. This is an uncharacterized protein from Bacillus subtilis (strain 168).